The sequence spans 344 residues: RNA-binding protein squid (344 aa).

Residues 1-55 are disordered; the sequence is MAENKQVDTEINGEDFTKDVTADGPGSENGDAGAAGSTNGSSDNQSAASGQRDDD. The span at 36 to 49 shows a compositional bias: polar residues; sequence GSTNGSSDNQSAAS. 2 consecutive RRM domains span residues 56–138 and 136–213; these read RKLF…HGKI and GKIF…RATP. S148 bears the Phosphoserine mark. Disordered regions lie at residues 214–238 and 301–344; these read KPEN…RGGY and GGGG…HQPY. Residues 215-254 are M9-like motif; sequence PENQMMGGMRGGPRGGMRGGRGGYGGRGGYNNQWDGQGSY. 2 stretches are compositionally biased toward gly residues: residues 222-238 and 301-337; these read GMRG…RGGY and GGGG…GGGR. Residues 300–338 form an M9 motif region; sequence GGGGGGNMGGGRGGPRGGGGPKGGGGFNGGKQRGGGGRQ.

In terms of assembly, interacts with bru1/Bruno; the interaction is direct but weak, and may play a role in regulation of grk mRNA localization and translation. As to quaternary structure, interacts (probably via M9 and M9-like motifs) with Tnpo/Transportin; the interaction is direct and is involved in nuclear localization. Interacts with fs(1)K10 (via N-terminus); may be involved in localization of sqd in the oocyte during oogenesis. Interacts (via C-terminus) with Hrb27C; the interaction is RNA dependent. Does not interact with Tnpo/Transportin. Interacts with fs(1)K10 (via N-terminus); may be involved in localization of sqd in the oocyte during oogenesis. In terms of assembly, interacts (probably via M9-like motif) with Tnpo/Transportin; the interaction is direct and is involved in nuclear localization. Interacts with fs(1)K10 (via N-terminus); may be involved in localization of sqd in the oocyte during oogenesis.

It localises to the nucleus. It is found in the cytoplasm. Component of ribonucleosomes. Could be needed to organize a concentration gradient of a dorsalizing morphogen (Dm) originating in the germinal vesicle. At least one of the isoforms is essential in somatic tissues. Interacts with grk mRNA (via 3' UTR) and involved in its localization to the dorsal anterior region of the oocyte during dorsal-ventral axis determination; may function as a ribonuclear protein complex together with otu and Hrb27C. Required for polytene chromosome dispersal in nurse cells during oogenesis; nuclear isoforms play a greater role in this than cytoplasmic isoforms. In terms of biological role, required nonredundantly with isoform A/sqdA for dorsoventral pattern determination during oogenesis. May be important in somatic tissues. Its function is as follows. Required nonredundantly with isoform B/SqdS for dorsoventral pattern determination during oogenesis. Functionally, may lack a role in dorsoventral pattern determination during oogenesis. May be important in somatic tissues. This is RNA-binding protein squid from Drosophila melanogaster (Fruit fly).